The following is a 424-amino-acid chain: Omega-6 fatty acid desaturase, chloroplastic (424 aa).

A chloroplast-targeting transit peptide spans 1-63 (MACTLADSLL…TRNKVTVIHA (63 aa)). Valine 64 carries the N-acetylvaline modification. Positions 165 to 169 (HDCAH) match the Histidine box-1 motif. The Histidine box-2 motif lies at 201–205 (HDRHH). The Histidine box-3 motif lies at 361-365 (HIPHH).

This sequence belongs to the fatty acid desaturase type 1 family.

The protein resides in the plastid. It is found in the chloroplast membrane. The catalysed reaction is a (9Z)-octadecenoyl-containing glycerolipid + 2 reduced [2Fe-2S]-[ferredoxin] + O2 + 2 H(+) = a (9Z,12Z)-octadecadienoyl-containing glycerolipid + 2 oxidized [2Fe-2S]-[ferredoxin] + 2 H2O. The protein operates within lipid metabolism; polyunsaturated fatty acid biosynthesis. Its function is as follows. Chloroplast omega-6 fatty acid desaturase introduces the second double bond in the biosynthesis of 16:3 and 18:3 fatty acids, important constituents of plant membranes. It is thought to use ferredoxin as an electron donor and to act on fatty acids esterified to galactolipids, sulfolipids and phosphatidylglycerol. This is Omega-6 fatty acid desaturase, chloroplastic from Glycine max (Soybean).